The sequence spans 389 residues: Glutamate 5-kinase (389 aa).

Lys17 contacts ATP. Ser57, Asp144, and Asn156 together coordinate substrate. Position 176–177 (176–177 (SD)) interacts with ATP. The PUA domain occupies 282-359 (AGEIHVDAGA…NEIETILGYV (78 aa)).

Belongs to the glutamate 5-kinase family.

It localises to the cytoplasm. The enzyme catalyses L-glutamate + ATP = L-glutamyl 5-phosphate + ADP. Its pathway is amino-acid biosynthesis; L-proline biosynthesis; L-glutamate 5-semialdehyde from L-glutamate: step 1/2. Catalyzes the transfer of a phosphate group to glutamate to form L-glutamate 5-phosphate. The chain is Glutamate 5-kinase from Agrobacterium fabrum (strain C58 / ATCC 33970) (Agrobacterium tumefaciens (strain C58)).